Reading from the N-terminus, the 59-residue chain is uncharacterized protein (59 aa).

The N-terminal stretch at 1 to 17 (MIASIWYAELGCASAIA) is a signal peptide.

This is an uncharacterized protein from Rickettsia prowazekii (strain Madrid E).